The chain runs to 182 residues: ATP synthase subunit delta (182 aa).

It belongs to the ATPase delta chain family. F-type ATPases have 2 components, F(1) - the catalytic core - and F(0) - the membrane proton channel. F(1) has five subunits: alpha(3), beta(3), gamma(1), delta(1), epsilon(1). CF(0) has four main subunits: a(1), b(1), b'(1) and c(10-14). The alpha and beta chains form an alternating ring which encloses part of the gamma chain. F(1) is attached to F(0) by a central stalk formed by the gamma and epsilon chains, while a peripheral stalk is formed by the delta, b and b' chains.

The protein localises to the cellular thylakoid membrane. Functionally, f(1)F(0) ATP synthase produces ATP from ADP in the presence of a proton or sodium gradient. F-type ATPases consist of two structural domains, F(1) containing the extramembraneous catalytic core and F(0) containing the membrane proton channel, linked together by a central stalk and a peripheral stalk. During catalysis, ATP synthesis in the catalytic domain of F(1) is coupled via a rotary mechanism of the central stalk subunits to proton translocation. This protein is part of the stalk that links CF(0) to CF(1). It either transmits conformational changes from CF(0) to CF(1) or is implicated in proton conduction. In Synechococcus sp. (strain CC9902), this protein is ATP synthase subunit delta.